The sequence spans 249 residues: ATP synthase subunit a (249 aa).

A run of 6 helical transmembrane segments spans residues 33–53, 83–103, 113–133, 139–159, 188–208, and 216–236; these read YMLIAVAIISLLMLASGAQLV, FFPLIFSLFMFICVSNLIGII, LIVTAALALLVFFTVLIYGVA, FFSIFVPHGVPGYILPLVMFI, VFAGFVAMLGFSLGALGWVGG, and VALYALEILVAFLQAYVFAIL.

The protein belongs to the ATPase A chain family. F-type ATPases have 2 components, CF(1) - the catalytic core - and CF(0) - the membrane proton channel. CF(1) has five subunits: alpha(3), beta(3), gamma(1), delta(1), epsilon(1). CF(0) has three main subunits: a(1), b(2) and c(9-12). The alpha and beta chains form an alternating ring which encloses part of the gamma chain. CF(1) is attached to CF(0) by a central stalk formed by the gamma and epsilon chains, while a peripheral stalk is formed by the delta and b chains.

The protein localises to the cell inner membrane. Its function is as follows. Key component of the proton channel; it plays a direct role in the translocation of protons across the membrane. This is ATP synthase subunit a from Bradyrhizobium diazoefficiens (strain JCM 10833 / BCRC 13528 / IAM 13628 / NBRC 14792 / USDA 110).